Consider the following 982-residue polypeptide: Mineralocorticoid receptor (982 aa).

The interval 1–601 is modulating; that stretch reads METKGYHSLP…STGSSRPSKI (601 aa). Over residues 230-242 the composition is skewed to polar residues; sequence QGTPLTCSPNVEN. Disordered regions lie at residues 230–328 and 345–375; these read QGTP…AAST and SGTS…PFPK. A phosphoserine mark is found at Ser-249, Ser-258, Ser-282, Ser-286, and Ser-298. Positions 258–299 are enriched in low complexity; sequence SPLSSPLSSMKSSISSPPSHCSVKSPVSSPNNVTPRSSVSSP. The span at 300 to 328 shows a compositional bias: polar residues; sequence ANINNSRCSVSSPSNTNNRSTLSSPAAST. Low complexity predominate over residues 345-354; that stretch reads SGTSAGSSTS. Zn(2+) is bound by residues Cys-602, Cys-605, Cys-619, Cys-622, Cys-638, Cys-644, Cys-654, and Cys-657. NR C4-type zinc fingers lie at residues 602-622 and 638-662; these read CLVC…CGSC and CAGR…LQKC. The nuclear receptor DNA-binding region spans 602–667; sequence CLVCGDEASG…RLQKCLQAGM (66 aa). A hinge region spans residues 668-723; it reads NLGARRSKKLGKLKGIHEEQPQQQPPPPPPPPQSPEEGTTYIAPAKEPSVNTALVP. A disordered region spans residues 682–708; that stretch reads GIHEEQPQQQPPPPPPPPQSPEEGTTY. Positions 690-701 are enriched in pro residues; it reads QQPPPPPPPPQS. One can recognise an NR LBD domain in the interval 724–962; the sequence is QLSAISRALT…EFPAMLVEII (239 aa). Residues Asn-768 and Gln-774 each coordinate 21-hydroxyprogesterone. Residues Asn-768 and Gln-774 each coordinate aldosterone. Residues Asn-768 and Gln-774 each coordinate progesterone. Residues 780–783 form an important for coactivator binding region; it reads KWAK. Residues Arg-815 and Thr-943 each contribute to the 21-hydroxyprogesterone site. Residues Arg-815 and Thr-943 each contribute to the aldosterone site. Progesterone is bound by residues Arg-815 and Thr-943.

This sequence belongs to the nuclear hormone receptor family. NR3 subfamily. Phosphorylated. As to expression, expressed in hippocampus, being restricted to the more superficial cortical layers.

The protein localises to the cytoplasm. Its subcellular location is the nucleus. In terms of biological role, receptor for both mineralocorticoids (MC) such as aldosterone and glucocorticoids (GC) such as corticosterone or cortisol. Binds to mineralocorticoid response elements (MRE) and transactivates target genes. The effect of MC is to increase ion and water transport and thus raise extracellular fluid volume and blood pressure and lower potassium levels. This Saimiri sciureus (Common squirrel monkey) protein is Mineralocorticoid receptor (NR3C2).